A 288-amino-acid polypeptide reads, in one-letter code: Acetyl-coenzyme A carboxylase carboxyl transferase subunit beta (288 aa).

A CoA carboxyltransferase N-terminal domain is found at 30 to 288 (IMTKCPKCKK…KMHQEVKTNA (259 aa)). The Zn(2+) site is built by Cys34, Cys37, Cys53, and Cys56. The C4-type zinc-finger motif lies at 34 to 56 (CPKCKKIMYTKELAENLNVCFNC).

The protein belongs to the AccD/PCCB family. As to quaternary structure, acetyl-CoA carboxylase is a heterohexamer composed of biotin carboxyl carrier protein (AccB), biotin carboxylase (AccC) and two subunits each of ACCase subunit alpha (AccA) and ACCase subunit beta (AccD). The cofactor is Zn(2+).

It localises to the cytoplasm. The catalysed reaction is N(6)-carboxybiotinyl-L-lysyl-[protein] + acetyl-CoA = N(6)-biotinyl-L-lysyl-[protein] + malonyl-CoA. Its pathway is lipid metabolism; malonyl-CoA biosynthesis; malonyl-CoA from acetyl-CoA: step 1/1. Functionally, component of the acetyl coenzyme A carboxylase (ACC) complex. Biotin carboxylase (BC) catalyzes the carboxylation of biotin on its carrier protein (BCCP) and then the CO(2) group is transferred by the transcarboxylase to acetyl-CoA to form malonyl-CoA. This Staphylococcus saprophyticus subsp. saprophyticus (strain ATCC 15305 / DSM 20229 / NCIMB 8711 / NCTC 7292 / S-41) protein is Acetyl-coenzyme A carboxylase carboxyl transferase subunit beta.